The primary structure comprises 585 residues: Arginine--tRNA ligase (585 aa).

Positions 131-141 (ANPTGPMHVGH) match the 'HIGH' region motif.

It belongs to the class-I aminoacyl-tRNA synthetase family. As to quaternary structure, monomer.

The protein localises to the cytoplasm. It carries out the reaction tRNA(Arg) + L-arginine + ATP = L-arginyl-tRNA(Arg) + AMP + diphosphate. In Brucella anthropi (strain ATCC 49188 / DSM 6882 / CCUG 24695 / JCM 21032 / LMG 3331 / NBRC 15819 / NCTC 12168 / Alc 37) (Ochrobactrum anthropi), this protein is Arginine--tRNA ligase.